The sequence spans 84 residues: Exodeoxyribonuclease 7 small subunit (84 aa).

It belongs to the XseB family. Heterooligomer composed of large and small subunits.

The protein resides in the cytoplasm. The enzyme catalyses Exonucleolytic cleavage in either 5'- to 3'- or 3'- to 5'-direction to yield nucleoside 5'-phosphates.. Functionally, bidirectionally degrades single-stranded DNA into large acid-insoluble oligonucleotides, which are then degraded further into small acid-soluble oligonucleotides. This Bartonella henselae (strain ATCC 49882 / DSM 28221 / CCUG 30454 / Houston 1) (Rochalimaea henselae) protein is Exodeoxyribonuclease 7 small subunit.